The primary structure comprises 157 residues: UPF0225 protein PSPPH_1399 (157 aa).

It belongs to the UPF0225 family.

The polypeptide is UPF0225 protein PSPPH_1399 (Pseudomonas savastanoi pv. phaseolicola (strain 1448A / Race 6) (Pseudomonas syringae pv. phaseolicola (strain 1448A / Race 6))).